The sequence spans 439 residues: 3-phosphoshikimate 1-carboxyvinyltransferase (439 aa).

The 3-phosphoshikimate site is built by Lys-21, Ser-22, and Arg-26. Lys-21 is a phosphoenolpyruvate binding site. Phosphoenolpyruvate is bound by residues Gly-94 and Arg-122. Residues Ser-167, Gln-169, Asp-320, and Lys-347 each contribute to the 3-phosphoshikimate site. Gln-169 is a binding site for phosphoenolpyruvate. Residue Asp-320 is the Proton acceptor of the active site. Phosphoenolpyruvate-binding residues include Arg-351 and Arg-395.

It belongs to the EPSP synthase family. As to quaternary structure, monomer.

It is found in the cytoplasm. The enzyme catalyses 3-phosphoshikimate + phosphoenolpyruvate = 5-O-(1-carboxyvinyl)-3-phosphoshikimate + phosphate. The protein operates within metabolic intermediate biosynthesis; chorismate biosynthesis; chorismate from D-erythrose 4-phosphate and phosphoenolpyruvate: step 6/7. In terms of biological role, catalyzes the transfer of the enolpyruvyl moiety of phosphoenolpyruvate (PEP) to the 5-hydroxyl of shikimate-3-phosphate (S3P) to produce enolpyruvyl shikimate-3-phosphate and inorganic phosphate. The polypeptide is 3-phosphoshikimate 1-carboxyvinyltransferase (Hyphomonas neptunium (strain ATCC 15444)).